The primary structure comprises 561 residues: Putative transport protein KPN78578_08530 (561 aa).

Helical transmembrane passes span 8-28 (LLNGNYILLLFVVLALGLCLG), 37-57 (LGNSIGVLVVSLLLGQQHFAI), 66-86 (FMLFIFCVGVEAGPNFFSIFF), 94-114 (MLALVMVGSAMLIAMVLGKVF), and 158-178 (HLSLGYALTYLVGLVSLIVGA). RCK C-terminal domains are found at residues 202 to 288 (LDTD…SFRN) and 292 to 373 (VFDR…RIGF). Helical transmembrane passes span 383–403 (LLAFCAFFIVGLMIGMITFQF), 406–426 (FSFGIGNAAGLLFAGIMLGFL), 447–467 (FGLMVFMAGVGLSAGAGINNG), 478–498 (AGLIVSLVPVVICFLFGAYVL), and 540–560 (AIANVLLTLAGTLIVIIWPGL).

This sequence belongs to the AAE transporter (TC 2.A.81) family. YbjL subfamily.

It localises to the cell membrane. The polypeptide is Putative transport protein KPN78578_08530 (Klebsiella pneumoniae subsp. pneumoniae (strain ATCC 700721 / MGH 78578)).